Reading from the N-terminus, the 255-residue chain is 5-oxoprolinase subunit A (255 aa).

The protein belongs to the LamB/PxpA family. As to quaternary structure, forms a complex composed of PxpA, PxpB and PxpC.

The enzyme catalyses 5-oxo-L-proline + ATP + 2 H2O = L-glutamate + ADP + phosphate + H(+). Catalyzes the cleavage of 5-oxoproline to form L-glutamate coupled to the hydrolysis of ATP to ADP and inorganic phosphate. The polypeptide is 5-oxoprolinase subunit A (Corynebacterium efficiens (strain DSM 44549 / YS-314 / AJ 12310 / JCM 11189 / NBRC 100395)).